The sequence spans 255 residues: TIR domain-containing protein (255 aa).

Residues 9–185 (LSDQVFINFR…DIVKEVKKQL (177 aa)) form the TIR domain. The active site involves Glu-83. 2 helical membrane-spanning segments follow: residues 195–215 (AIGV…FIAP) and 223–243 (FFQT…SWFW). Residues 201-255 (LAITINLIFSFFIAPKYLPDQKFFQTPEWFIGTLAVVLASWFWYKNNQNKAPPPS) form the KASH domain.

In terms of assembly, forms homomers. Interacts with SUN1, SUN2, SUN3, SUN4 and SUN5.

The protein localises to the nucleus membrane. It catalyses the reaction NAD(+) + H2O = ADP-D-ribose + nicotinamide + H(+). Could play a role in nuclear morphology, specifically nuclear size. This Arabidopsis thaliana (Mouse-ear cress) protein is TIR domain-containing protein.